A 436-amino-acid polypeptide reads, in one-letter code: D-aminoacyl-tRNA deacylase (436 aa).

This sequence belongs to the DtdA deacylase family. As to quaternary structure, monomer. Zn(2+) is required as a cofactor.

It catalyses the reaction a D-aminoacyl-tRNA + H2O = a tRNA + a D-alpha-amino acid + H(+). It carries out the reaction glycyl-tRNA(Ala) + H2O = tRNA(Ala) + glycine + H(+). D-aminoacyl-tRNA deacylase with broad substrate specificity. By recycling D-aminoacyl-tRNA to D-amino acids and free tRNA molecules, this enzyme counteracts the toxicity associated with the formation of D-aminoacyl-tRNA entities in vivo. This chain is D-aminoacyl-tRNA deacylase, found in Methanoregula boonei (strain DSM 21154 / JCM 14090 / 6A8).